A 442-amino-acid chain; its full sequence is MSVLWSHCISKLEGELPPQQFNTWIRPLQAVEDGGELRLLAPNRFVLDWVKQHFIGKIEEVVSEQNRDSAPNVVLEIGSRAAEAAQMRSANPPRKTAPARKQVPNNLNSAFIFGNFVEGKSNQLAKAASLQVAQNVGRAYNPLFIYGGVGLGKTHLMHAIGNEILRGNPAANIVYLHSERFVSDMVKALQHNAINAFKEFYRTVDALLIDDIQFFAGKERSQEEFFHTFNTLLENKHQVVLTCDRYPKEIKGLEERLKSRFGWGLPVAIEPPDLETRVAILMSKAQQSGIDLSPEVAFFIGKRIRSNIRELEGALRRVIANAQFTGRPITLEFAKEALRDLIALQDRMINVENIQKTVSEYFKIRQADLLSNKRTRSLTRPRQIAMALSKELTSHSLPEIGQMFGGRDHTTVLHACRKVQELKESDARFMEDFSNLLRILSN.

The tract at residues 1 to 84 (MSVLWSHCIS…LEIGSRAAEA (84 aa)) is domain I, interacts with DnaA modulators. The tract at residues 84–105 (AAQMRSANPPRKTAPARKQVPN) is domain II. Positions 106-322 (NLNSAFIFGN…GALRRVIANA (217 aa)) are domain III, AAA+ region. The ATP site is built by glycine 150, glycine 152, lysine 153, and threonine 154. The tract at residues 323-442 (QFTGRPITLE…FSNLLRILSN (120 aa)) is domain IV, binds dsDNA.

Belongs to the DnaA family. In terms of assembly, oligomerizes as a right-handed, spiral filament on DNA at oriC.

The protein resides in the cytoplasm. Plays an essential role in the initiation and regulation of chromosomal replication. ATP-DnaA binds to the origin of replication (oriC) to initiate formation of the DNA replication initiation complex once per cell cycle. Binds the DnaA box (a 9 base pair repeat at the origin) and separates the double-stranded (ds)DNA. Forms a right-handed helical filament on oriC DNA; dsDNA binds to the exterior of the filament while single-stranded (ss)DNA is stabiized in the filament's interior. The ATP-DnaA-oriC complex binds and stabilizes one strand of the AT-rich DNA unwinding element (DUE), permitting loading of DNA polymerase. After initiation quickly degrades to an ADP-DnaA complex that is not apt for DNA replication. Binds acidic phospholipids. The sequence is that of Chromosomal replication initiator protein DnaA from Methylococcus capsulatus (strain ATCC 33009 / NCIMB 11132 / Bath).